The primary structure comprises 58 residues: ATP synthase F(0) complex subunit k, mitochondrial (58 aa).

N6-acetyllysine occurs at positions 16 and 17. The helical transmembrane segment at 23–45 (TLTGRMNCVLATYGSIALIVLYF) threads the bilayer.

In terms of assembly, component of the ATP synthase complex composed at least of ATP5F1A/subunit alpha, ATP5F1B/subunit beta, ATP5MC1/subunit c (homooctomer), MT-ATP6/subunit a, MT-ATP8/subunit 8, ATP5ME/subunit e, ATP5MF/subunit f, ATP5MG/subunit g, ATP5MK/subunit k, ATP5MJ/subunit j, ATP5F1C/subunit gamma, ATP5F1D/subunit delta, ATP5F1E/subunit epsilon, ATP5PF/subunit F6, ATP5PB/subunit b, ATP5PD/subunit d, ATP5PO/subunit OSCP. ATP synthase complex consists of a soluble F(1) head domain (subunits alpha(3) and beta(3)) - the catalytic core - and a membrane F(0) domain - the membrane proton channel (subunits c, a, 8, e, f, g, k and j). These two domains are linked by a central stalk (subunits gamma, delta, and epsilon) rotating inside the F1 region and a stationary peripheral stalk (subunits F6, b, d, and OSCP). The ATP synthase complex/complex V exists as a monomeric and a dimeric supercomplex that helps shape mitochondrial cristae to optimize proton flow.

It is found in the mitochondrion membrane. Its function is as follows. Subunit k, of the mitochondrial membrane ATP synthase complex (F(1)F(0) ATP synthase or Complex V) that produces ATP from ADP in the presence of a proton gradient across the membrane which is generated by electron transport complexes of the respiratory chain. ATP synthase complex consist of a soluble F(1) head domain - the catalytic core - and a membrane F(1) domain - the membrane proton channel. These two domains are linked by a central stalk rotating inside the F(1) region and a stationary peripheral stalk. During catalysis, ATP synthesis in the catalytic domain of F(1) is coupled via a rotary mechanism of the central stalk subunits to proton translocation. In vivo, can only synthesize ATP although its ATP hydrolase activity can be activated artificially in vitro. Part of the complex F(0) domain. Required for dimerization of the ATP synthase complex and as such regulates ATP synthesis in the mitochondria. In Homo sapiens (Human), this protein is ATP synthase F(0) complex subunit k, mitochondrial.